The sequence spans 372 residues: MTDPLAELSAAGVSIWIDDISRDRLQTGNLAALIRDRHVVGVTTNPTIFGKAIEGSARYQDQLRDLAVRGVDVNEALRALTAYDVRWACDVTRPVFDATDGVDGRVSIEVDPRLAHDTEATIAEARALWWLVDRPNLFIKIPATVEGLPAIAQCLAEGISVNVTLIFSVKRYEQVIDAFFDGVERAIEAGHDLSRLASVASFFVSRVDTEVDKRLEKIGGEALQWKAKAAVANARLAYRTYEEKFATPRWQALAAKGARPQRPLWASTSTKDPSLPDTLYVTELVAPGTVNTMPESTLQAVYDHGVIRGDTIRGYYADAQATLDALATLGIDYDDVTDTLEREGVEKFEASWTELAAAVTRSLERARRERGR.

Catalysis depends on Lys-140, which acts as the Schiff-base intermediate with substrate.

Belongs to the transaldolase family. Type 2 subfamily.

The protein localises to the cytoplasm. The catalysed reaction is D-sedoheptulose 7-phosphate + D-glyceraldehyde 3-phosphate = D-erythrose 4-phosphate + beta-D-fructose 6-phosphate. The protein operates within carbohydrate degradation; pentose phosphate pathway; D-glyceraldehyde 3-phosphate and beta-D-fructose 6-phosphate from D-ribose 5-phosphate and D-xylulose 5-phosphate (non-oxidative stage): step 2/3. Transaldolase is important for the balance of metabolites in the pentose-phosphate pathway. The protein is Transaldolase of Acidothermus cellulolyticus (strain ATCC 43068 / DSM 8971 / 11B).